A 905-amino-acid chain; its full sequence is MGDYVTPGEEPPQPGIYRSEQMCLAQLYLQSDASYQCVAELGELGLVQFRDLNPDVSSFQRKYVNEVRRCDEMERKLRYLEREIKKDQIPMLDTGENPDAPLPREMIDLEATFEKLENELREVNKNEETLKKNFSELTELKHILRKTQTFFEEVDHDRWRILEGGSGRRGRSTEREETRPLIDIGDMDDDSAARMSAQAAMLRLGFVAGVIQRERLPAFERLLWRACRGNVFLRTSEIDDVLNDTVTGDPVNKCVFIIFFQGDHLKTKVKKICEGFRATLYPCPDTPQERREMSIGVMTRIEDLKTVLGQTQDHRHRVLVAASKNVRMWLTKVRKIKSIYHTLNLFNIDVTQKCLIAEVWCPIAELDRIKMALKRGTDESGSQVPSILNRMETNEAPPTYNKTNKFTKGFQNIVDAYGIATYREINPAPYTMISFPFLFAVMFGDMGHGAIMLLAALFFILKEKQLEAARIKDEIFQTFFGGRYVIFLMGAFSIYTGFMYNDVFSKSINTFGSSWQNTIPESVIDYYLDDEKRSESQLILPPETAFDGNPYPIGVDPVWNLAEGNKLSFLNSMKMKMSVLFGIAQMTFGVLLSYQNFIYFKSDLDIKYMFIPQMIFLSSIFIYLCIQILSKWLFFGAVGGTVLGYKYPGSNCAPSLLIGLINMFMMKSRNAGFVDDSGETYPQCYLSTWYPGQATIEIILVVLALVQVPIMLFAKPYFLYRRDKQQSRYSTLTAESNQHQSVRADINQDDAEVVHAPEQTPKPSGHGHGHGDGPLEMGDVMVYQAIHTIEFVLGCVSHTASYLRLWALSLAHAQLSDVLWTMVFRNAFVLDGYTGAIATYILFFIFGSLSVFILVLMEGLSAFLHALRLHWVEFQSKFYGGLGYEFAPFSFEKILAEEREAEENL.

The Cytoplasmic segment spans residues 1–424 (MGDYVTPGEE…DAYGIATYRE (424 aa)). Residues 425–443 (INPAPYTMISFPFLFAVMF) form a helical membrane-spanning segment. The Lumenal portion of the chain corresponds to 444 to 445 (GD). A helical membrane pass occupies residues 446–462 (MGHGAIMLLAALFFILK). At 463-477 (EKQLEAARIKDEIFQ) the chain is on the cytoplasmic side. Residues 478 to 507 (TFFGGRYVIFLMGAFSIYTGFMYNDVFSKS) form a helical membrane-spanning segment. At 508–572 (INTFGSSWQN…EGNKLSFLNS (65 aa)) the chain is on the lumenal side. A helical transmembrane segment spans residues 573-592 (MKMKMSVLFGIAQMTFGVLL). The Cytoplasmic portion of the chain corresponds to 593–610 (SYQNFIYFKSDLDIKYMF). A helical transmembrane segment spans residues 611–631 (IPQMIFLSSIFIYLCIQILSK). At 632–699 (WLFFGAVGGT…YPGQATIEII (68 aa)) the chain is on the lumenal side. Residues 700 to 719 (LVVLALVQVPIMLFAKPYFL) form a helical membrane-spanning segment. Residues 720–788 (YRRDKQQSRY…DVMVYQAIHT (69 aa)) lie on the Cytoplasmic side of the membrane. The chain crosses the membrane as a helical span at residues 789 to 813 (IEFVLGCVSHTASYLRLWALSLAHA). The Lumenal segment spans residues 814–834 (QLSDVLWTMVFRNAFVLDGYT). A helical membrane pass occupies residues 835 to 873 (GAIATYILFFIFGSLSVFILVLMEGLSAFLHALRLHWVE). Residues 874 to 905 (FQSKFYGGLGYEFAPFSFEKILAEEREAEENL) are Cytoplasmic-facing.

It belongs to the V-ATPase 116 kDa subunit family. In terms of assembly, V-ATPase is a heteromultimeric enzyme made up of two complexes: the ATP-hydrolytic V1 complex and the proton translocation V0 complex. The V1 complex consists of three catalytic AB heterodimers that form a heterohexamer, three peripheral stalks each consisting of EG heterodimers, one central rotor including subunits D and F, and the regulatory subunits C and H. The proton translocation complex V0 consists of the proton transport subunit a, a ring of proteolipid subunits c9c'', rotary subunit d, subunits e and f, and the accessory subunits vah-19/Ac45 and vah-20/PRR. Interacts with V-type proton ATPase subunit C vha-11. Ubiquitous expression in embryos. Expressed in gonads, intestine, neurons in the head and motoneurons in the ventral cord of larvae and adults. Expressed in the vulvae and spermathecal uterine valves. Weakly expressed in the pharynx. As to expression, specifically expressed in the nervous system.

Its subcellular location is the membrane. Its function is as follows. Subunit of the V0 complex of vacuolar(H+)-ATPase (V-ATPase), a multisubunit enzyme composed of a peripheral complex (V1) that hydrolyzes ATP and a membrane integral complex (V0) that translocates protons. V-ATPase is responsible for acidifying and maintaining the pH of intracellular compartments and in some cell types, is targeted to the plasma membrane, where it is responsible for acidifying the extracellular environment. Required for assembly and activity of the vacuolar ATPase. Regulates the size of gut granules during embryonic development. In neurons, required for necrotic cell death by promoting intracellular acidification. Required for cell death induced by hypoxia. Required for acidification of synaptic vesicles and the release of neurotransmitters from adult neurons. The sequence is that of V-type proton ATPase 116 kDa subunit a 1 from Caenorhabditis elegans.